The sequence spans 101 residues: Small ribosomal subunit protein uS14 (101 aa).

This sequence belongs to the universal ribosomal protein uS14 family. As to quaternary structure, part of the 30S ribosomal subunit. Contacts proteins S3 and S10.

In terms of biological role, binds 16S rRNA, required for the assembly of 30S particles and may also be responsible for determining the conformation of the 16S rRNA at the A site. The protein is Small ribosomal subunit protein uS14 of Shewanella denitrificans (strain OS217 / ATCC BAA-1090 / DSM 15013).